Here is a 330-residue protein sequence, read N- to C-terminus: AA9 family lytic polysaccharide monooxygenase E (330 aa).

Residues 1 to 20 (MRSTLVTGLIAGLLSQQAAA) form the signal peptide. The Cu(2+) site is built by H21 and H99. C58 and C193 are joined by a disulfide. Residues H179 and Q188 each coordinate O2. Y190 contacts Cu(2+). Residues 293–330 (CSVAKYQQCGGTGYTGCTSCASGSTCSAVSPPYYSQCV) enclose the CBM1 domain.

It belongs to the polysaccharide monooxygenase AA9 family. It depends on Cu(2+) as a cofactor.

It localises to the secreted. The enzyme catalyses [(1-&gt;4)-beta-D-glucosyl]n+m + reduced acceptor + O2 = 4-dehydro-beta-D-glucosyl-[(1-&gt;4)-beta-D-glucosyl]n-1 + [(1-&gt;4)-beta-D-glucosyl]m + acceptor + H2O.. In terms of biological role, lytic polysaccharide monooxygenase (LPMO) that depolymerizes crystalline and amorphous polysaccharides via the oxidation of scissile alpha- or beta-(1-4)-glycosidic bonds, yielding exclusively C1 oxidation products. Catalysis by LPMOs requires the reduction of the active-site copper from Cu(II) to Cu(I) by a reducing agent and H(2)O(2) or O(2) as a cosubstrate. In Neurospora crassa (strain ATCC 24698 / 74-OR23-1A / CBS 708.71 / DSM 1257 / FGSC 987), this protein is AA9 family lytic polysaccharide monooxygenase E (gh61-5).